We begin with the raw amino-acid sequence, 1086 residues long: MDAKDEKRFNLALQINNFKASLVEFNKLVEQTTAQKKEERAGIFIPKEDSIDYDKFYTSVQQIFGPEVKNQDVKCFYRKLCNNPDAAFDWCEIFGYFSTDEDSLTSQMDEENLVFLVSRKQRIVIAGSRRRDVIKCIVKVPQLDLLITASQKGLITVFNSQDTSWITGCDYLGQLKRIVATTERTIIVWDYKAQGSSQEHYFVIKPMDHCLLCVCVVPLPDQLCRDDILLGDDGGFVNKFTVSSDDFGLKQAKTKKKLQTQVLDSKNFKSVKRKLHNDWVMKIRYIPALNCFGSCSLDSVHSLVLESLKRLEDNLPVREFAMPRGANSFCYCGKANVIVTGGDDKVLRLWHPNISTKPVGKLVGHMFSITEIVSNEKEQHVISLSSAKVFRVWDIQTLSVLQVFHDSQGGPGDMQIYSMVYDANHGMLITGSGVIDMYPLTRMIQDTKQVPHTHEREVNVTLYNKYFHQVLTVCSESVIKVWELETGLQIYQILDPHGLSIELTCAAIDESGYLFATGAYNGTVKIWDFGSGQEMKMMPEGKDWVEEEHGLMRLFFLKPQVKQQHLILALERNGTIKIIQGKEDDIFLTVIWELPDAMPYLQYGSHIVHLKMSTKERTMAIPFPDVELIVQKTSQQTNYSPIVDVDVNCIDVFQTEGYNLIACGTTNGMIILWNFIAASVKEIYRPEDCFSTDPELDPKRFRINDIMFLFRSPECVRRSSQDSICSSTQCDSSKGPQSSKGSKQSIHDADVKGEHTDMVGEQQSASRKQPVPISFVEPQPPLLVSAHEDGHLRLWTLEGKLIKDMLPFTKHSAISLTSLYTDSCCRVLLAGNVEGHVILCSISSFMDPPHDEKKFKQLLSWRAHSLEIIQVIYVEEKQLVLTASIDGSVRIWNSTSGHYCGYFGQRRMFDLSQTSDFILPCDVNEYPIEIKEESKFTEKTQKYEYPLIFDRERWKKMSSMSLLFKRPPLSPFEVQHDFKFFKSLSSPKIRRYALEGFLTENREAGIVFGSLPIYRVPSPTSLRFLPLIGSEVQRDSVEGVYMKKKHDKVKREEAPEMTEGSRRKSLKRNLVPQINLASSFFPTTPK.

WD repeat units lie at residues 129 to 168 (RRRDVIKCIVKVPQLDLLITASQKGLITVFNSQDTSWITG), 170 to 199 (DYLGQLKRIVATTERTIIVWDYKAQGSSQE), 321 to 360 (AMPRGANSFCYCGKANVIVTGGDDKVLRLWHPNISTKPVG), 364 to 403 (GHMFSITEIVSNEKEQHVISLSSAKVFRVWDIQTLSVLQV), 411 to 448 (PGDMQIYSMVYDANHGMLITGSGVIDMYPLTRMIQDTK), 453 to 492 (THEREVNVTLYNKYFHQVLTVCSESVIKVWELETGLQIYQ), 498 to 537 (GLSIELTCAAIDESGYLFATGAYNGTVKIWDFGSGQEMKM), 560 to 602 (QVKQ…PYLQ), and 642 to 683 (IVDV…VKEI). Residues 724–749 (ICSSTQCDSSKGPQSSKGSKQSIHDA) form a disordered region. Residues 732–744 (SSKGPQSSKGSKQ) are compositionally biased toward low complexity. WD repeat units lie at residues 765–806 (ASRK…KDML), 809–850 (TKHS…DPPH), and 863–902 (AHSLEIIQVIYVEEKQLVLTASIDGSVRIWNSTSGHYCGY). The disordered stretch occupies residues 1047–1069 (DKVKREEAPEMTEGSRRKSLKRN). The segment covering 1049–1062 (VKREEAPEMTEGSR) has biased composition (basic and acidic residues).

This Mus musculus (Mouse) protein is WD repeat-containing protein 64 (Wdr64).